The following is a 215-amino-acid chain: uncharacterized protein (215 aa).

This is an uncharacterized protein from Acanthamoeba polyphaga (Amoeba).